A 62-amino-acid chain; its full sequence is Sec-independent protein translocase protein TatA (62 aa).

A helical membrane pass occupies residues 1–21 (MFGIGIPELLVIFVLILLVFG).

Belongs to the TatA/E family. In terms of assembly, the Tat system comprises two distinct complexes: a TatABC complex, containing multiple copies of TatA, TatB and TatC subunits, and a separate TatA complex, containing only TatA subunits. Substrates initially bind to the TatABC complex, which probably triggers association of the separate TatA complex to form the active translocon.

Its subcellular location is the cell inner membrane. Part of the twin-arginine translocation (Tat) system that transports large folded proteins containing a characteristic twin-arginine motif in their signal peptide across membranes. TatA could form the protein-conducting channel of the Tat system. The polypeptide is Sec-independent protein translocase protein TatA (Oleidesulfovibrio alaskensis (strain ATCC BAA-1058 / DSM 17464 / G20) (Desulfovibrio alaskensis)).